We begin with the raw amino-acid sequence, 301 residues long: 4-hydroxybenzoate octaprenyltransferase (301 aa).

7 helical membrane passes run 34 to 54 (IGSL…AGGL), 57 to 77 (LWTL…GCVI), 108 to 128 (LWVF…LNWL), 163 to 183 (WGIP…AWLL), 222 to 242 (DLIA…LVGL), 248 to 268 (IAYW…FHIA), and 280 to 300 (FLHN…SLAL).

Belongs to the UbiA prenyltransferase family. It depends on Mg(2+) as a cofactor.

Its subcellular location is the cell inner membrane. The catalysed reaction is all-trans-octaprenyl diphosphate + 4-hydroxybenzoate = 4-hydroxy-3-(all-trans-octaprenyl)benzoate + diphosphate. Its pathway is cofactor biosynthesis; ubiquinone biosynthesis. Its function is as follows. Catalyzes the prenylation of para-hydroxybenzoate (PHB) with an all-trans polyprenyl group. Mediates the second step in the final reaction sequence of ubiquinone-8 (UQ-8) biosynthesis, which is the condensation of the polyisoprenoid side chain with PHB, generating the first membrane-bound Q intermediate 3-octaprenyl-4-hydroxybenzoate. The protein is 4-hydroxybenzoate octaprenyltransferase of Xanthomonas campestris pv. campestris (strain 8004).